We begin with the raw amino-acid sequence, 512 residues long: Calcium-dependent protein kinase 18 (512 aa).

Residues 1–25 are disordered; the sequence is MGLCSSSSARRDAGTPGGGNGAGNK. Residue G2 is the site of N-myristoyl glycine attachment. The Protein kinase domain occupies 52 to 312; that stretch reads YALGKLLGHG…AAQALSHEWV (261 aa). Residues 58–66 and K81 contribute to the ATP site; that span reads LGHGQFGYT. Residue D178 is the Proton acceptor of the active site. An autoinhibitory domain region spans residues 318–348; that stretch reads ASDIPLDISVLHNMRQFVKYSRFKQFALRAL. EF-hand domains are found at residues 355–390, 392–427, 434–469, and 472–499; these read EELS…DVPW, LKGP…VHQL, KWKS…KGSI, and LLEE…ASMS. Ca(2+) contacts are provided by D368, D370, N372, T374, E379, D405, N407, D409, E416, D447, D449, D451, Y453, E458, D477, D479, D481, K483, and E488.

Belongs to the protein kinase superfamily. Ser/Thr protein kinase family. CDPK subfamily. Interacts with MPK5. Autophosphorylated. Phosphorylated by MPK5.

The protein resides in the cell membrane. The enzyme catalyses L-seryl-[protein] + ATP = O-phospho-L-seryl-[protein] + ADP + H(+). It carries out the reaction L-threonyl-[protein] + ATP = O-phospho-L-threonyl-[protein] + ADP + H(+). Its activity is regulated as follows. Activated by calcium. Autophosphorylation may play an important role in the regulation of the kinase activity. Its function is as follows. May play a role in signal transduction pathways that involve calcium as a second messenger. Functions upstream of MPK5 in a signaling pathway that represses defense gene expression and negatively regulates resistance to rice blast fungus. Phosphorylates MPK5 at Thr-14 and Thr-32 and activates MPK5 independently of MAP kinase kinase (MKK) phosphorylation. May be involved in arbuscular mycorrhizal presymbiotic phase signaling. Phosphorylates the elicitor-responsive protein ERG1 in vitro. Phosphorylation is calcium-dependent. The polypeptide is Calcium-dependent protein kinase 18 (Oryza sativa subsp. japonica (Rice)).